We begin with the raw amino-acid sequence, 359 residues long: Structure-specific endonuclease subunit SLX1 homolog (359 aa).

Positions 9 to 91 (GLFACYCLVA…TYPTRSRYVN (83 aa)) constitute a GIY-YIG domain. Residues 192–238 (CPICQDGVSPSNVQCMQCSARFCITCAGKLFTRRNTLIPCFGKCPIC) form an SLX1-type zinc finger. Residues 256-359 (VAGRKSVPHK…LPSDVISITD (104 aa)) form a disordered region. Residues 269–281 (VDGQSSLSQNSSY) are compositionally biased toward polar residues. The segment covering 295–306 (EPEKDDISRDES) has biased composition (basic and acidic residues). Residues 316–326 (SSVALSDSSRS) are compositionally biased toward low complexity.

Belongs to the SLX1 family. As to quaternary structure, forms a heterodimer with a member of the SLX4 family. Requires a divalent metal cation as cofactor.

Its subcellular location is the nucleus. In terms of biological role, catalytic subunit of a heterodimeric structure-specific endonuclease that resolves DNA secondary structures generated during DNA repair and recombination. Has endonuclease activity towards branched DNA substrates, introducing single-strand cuts in duplex DNA close to junctions with ss-DNA. The protein is Structure-specific endonuclease subunit SLX1 homolog of Giardia intestinalis (strain ATCC 50803 / WB clone C6) (Giardia lamblia).